The following is a 399-amino-acid chain: Cyclic dehypoxanthine futalosine synthase (399 aa).

A Radical SAM core domain is found at 56–288; the sequence is ATYIIERNIN…IAIARVFLDN (233 aa). [4Fe-4S] cluster contacts are provided by C70, C74, and C77.

This sequence belongs to the radical SAM superfamily. MqnC family. [4Fe-4S] cluster serves as cofactor.

It catalyses the reaction dehypoxanthine futalosine + S-adenosyl-L-methionine = cyclic dehypoxanthinylfutalosinate + 5'-deoxyadenosine + L-methionine + H(+). Its pathway is quinol/quinone metabolism; menaquinone biosynthesis. In terms of biological role, radical SAM enzyme that catalyzes the cyclization of dehypoxanthine futalosine (DHFL) into cyclic dehypoxanthine futalosine (CDHFL), a step in the biosynthesis of menaquinone (MK, vitamin K2). The polypeptide is Cyclic dehypoxanthine futalosine synthase (Streptomyces coelicolor (strain ATCC BAA-471 / A3(2) / M145)).